A 950-amino-acid chain; its full sequence is Protocadherin alpha-13 (950 aa).

An N-terminal signal peptide occupies residues 1–29 (MLSSWQGGPRPRQLLLWLLILAAWETGSG). Residues 30–697 (QLHYSVPEEA…GPEAALVDVN (668 aa)) lie on the Extracellular side of the membrane. Cadherin domains are found at residues 34–133 (SVPE…PPIF), 134–242 (PESK…APEF), 243–350 (YQSV…APEV), 351–455 (TITS…APAF), 456–565 (AQPE…APAL), and 581–678 (MPRS…APQA). Residues asparagine 257 and asparagine 265 are each glycosylated (N-linked (GlcNAc...) asparagine). A glycan (N-linked (GlcNAc...) asparagine) is linked at asparagine 548. Residues 698–718 (VYLIIAICAVSSLLVLTLLLY) traverse the membrane as a helical segment. The Cytoplasmic portion of the chain corresponds to 719-950 (TALRCSAPPT…GNSTTDNSDQ (232 aa)). PXXP repeat units lie at residues 734–737 (PGKP), 774–777 (PSLP), 799–802 (PRQP), 832–835 (PGGP), 873–876 (PGNP), and 891–894 (PGSP). The tract at residues 734-894 (PGKPTLVCSS…PDKFIIPGSP (161 aa)) is 6 X 4 AA repeats of P-X-X-P. Disordered regions lie at residues 780-806 (LGSA…NPDW) and 829-950 (RAGP…NSDQ). The segment covering 787–800 (GQREEDSECLKEPR) has biased composition (basic and acidic residues). Basic and acidic residues predominate over residues 909 to 923 (DKSDFITFGKKEETK).

The protein localises to the cell membrane. In terms of biological role, potential calcium-dependent cell-adhesion protein. May be involved in the establishment and maintenance of specific neuronal connections in the brain. This Homo sapiens (Human) protein is Protocadherin alpha-13 (PCDHA13).